Consider the following 177-residue polypeptide: Large ribosomal subunit protein uL6 (177 aa).

The protein belongs to the universal ribosomal protein uL6 family. Part of the 50S ribosomal subunit.

Functionally, this protein binds to the 23S rRNA, and is important in its secondary structure. It is located near the subunit interface in the base of the L7/L12 stalk, and near the tRNA binding site of the peptidyltransferase center. The protein is Large ribosomal subunit protein uL6 of Hahella chejuensis (strain KCTC 2396).